We begin with the raw amino-acid sequence, 404 residues long: Cysteine desulfurase IscS (404 aa).

Pyridoxal 5'-phosphate is bound by residues alanine 75–threonine 76, asparagine 155, glutamine 183, and threonine 203–histidine 205. Position 206 is an N6-(pyridoxal phosphate)lysine (lysine 206). Threonine 243 is a pyridoxal 5'-phosphate binding site. Cysteine 328 functions as the Cysteine persulfide intermediate in the catalytic mechanism. Position 328 (cysteine 328) interacts with [2Fe-2S] cluster.

The protein belongs to the class-V pyridoxal-phosphate-dependent aminotransferase family. NifS/IscS subfamily. In terms of assembly, homodimer. Forms a heterotetramer with IscU, interacts with other sulfur acceptors. Requires pyridoxal 5'-phosphate as cofactor.

Its subcellular location is the cytoplasm. The catalysed reaction is (sulfur carrier)-H + L-cysteine = (sulfur carrier)-SH + L-alanine. It participates in cofactor biosynthesis; iron-sulfur cluster biosynthesis. In terms of biological role, master enzyme that delivers sulfur to a number of partners involved in Fe-S cluster assembly, tRNA modification or cofactor biosynthesis. Catalyzes the removal of elemental sulfur atoms from cysteine to produce alanine. Functions as a sulfur delivery protein for Fe-S cluster synthesis onto IscU, an Fe-S scaffold assembly protein, as well as other S acceptor proteins. This Enterobacter sp. (strain 638) protein is Cysteine desulfurase IscS.